The sequence spans 146 residues: Snaclec alboaggregin-B subunit beta (146 aa).

Residues 1-23 form the signal peptide; the sequence is MGRFIFGSFGLLVLFLSLSGTGA. The 120-residue stretch at 24–143 folds into the C-type lectin domain; sequence DCPSDWSSYD…CSRTYPFVCK (120 aa). 3 cysteine pairs are disulfide-bonded: Cys-25–Cys-36, Cys-53–Cys-142, and Cys-119–Cys-134.

It belongs to the snaclec family. Heterodimer of subunits alpha and beta; disulfide-linked. As to expression, expressed by the venom gland.

It localises to the secreted. In terms of biological role, weakly agglutinates platelets at high doses by binding to GPIbalpha (GP1BA). In Trimeresurus albolabris (White-lipped pit viper), this protein is Snaclec alboaggregin-B subunit beta.